Consider the following 875-residue polypeptide: Alanine--tRNA ligase (875 aa).

Zn(2+)-binding residues include His564, His568, Cys666, and His670.

This sequence belongs to the class-II aminoacyl-tRNA synthetase family. In terms of assembly, homotetramer. Zn(2+) is required as a cofactor.

The protein localises to the cytoplasm. It catalyses the reaction tRNA(Ala) + L-alanine + ATP = L-alanyl-tRNA(Ala) + AMP + diphosphate. In terms of biological role, catalyzes the attachment of alanine to tRNA(Ala) in a two-step reaction: alanine is first activated by ATP to form Ala-AMP and then transferred to the acceptor end of tRNA(Ala). Also edits incorrectly charged Ser-tRNA(Ala) and Gly-tRNA(Ala) via its editing domain. The polypeptide is Alanine--tRNA ligase (Sodalis glossinidius (strain morsitans)).